A 616-amino-acid chain; its full sequence is Electron transfer flavoprotein-ubiquinone oxidoreductase, mitochondrial (616 aa).

The N-terminal 32 residues, Met-1–Cys-32, are a transit peptide targeting the mitochondrion. FAD is bound at residue Val-70 to Ile-84. An N6-acetyllysine modification is found at Lys-95. The stretch at Ile-108–Asp-129 is an intramembrane region. Lys-131 and Lys-222 each carry N6-acetyllysine. A ubiquinone contacts are provided by Gly-304 and Gly-305. An N6-acetyllysine mark is found at Lys-356 and Lys-415. An intramembrane segment occupies Ala-427 to Glu-446. Ser-550 is subject to Phosphoserine. Cys-560, Cys-585, Cys-588, and Cys-591 together coordinate [4Fe-4S] cluster. Positions Phe-576–Pro-605 constitute a 4Fe-4S ferredoxin-type domain.

Belongs to the ETF-QO/FixC family. In terms of assembly, monomer. The cofactor is [4Fe-4S] cluster. FAD is required as a cofactor.

The protein resides in the mitochondrion inner membrane. The enzyme catalyses a ubiquinone + reduced [electron-transfer flavoprotein] = a ubiquinol + oxidized [electron-transfer flavoprotein] + H(+). Accepts electrons from ETF and reduces ubiquinone. The chain is Electron transfer flavoprotein-ubiquinone oxidoreductase, mitochondrial (Etfdh) from Rattus norvegicus (Rat).